Here is a 711-residue protein sequence, read N- to C-terminus: Ribosomal RNA large subunit methyltransferase K/L (711 aa).

The 112-residue stretch at 43–154 (LGYRITLWSR…RGQITIGLNF (112 aa)) folds into the THUMP domain.

The protein belongs to the methyltransferase superfamily. RlmKL family.

It is found in the cytoplasm. The catalysed reaction is guanosine(2445) in 23S rRNA + S-adenosyl-L-methionine = N(2)-methylguanosine(2445) in 23S rRNA + S-adenosyl-L-homocysteine + H(+). The enzyme catalyses guanosine(2069) in 23S rRNA + S-adenosyl-L-methionine = N(2)-methylguanosine(2069) in 23S rRNA + S-adenosyl-L-homocysteine + H(+). Functionally, specifically methylates the guanine in position 2445 (m2G2445) and the guanine in position 2069 (m7G2069) of 23S rRNA. In Shewanella woodyi (strain ATCC 51908 / MS32), this protein is Ribosomal RNA large subunit methyltransferase K/L.